An 850-amino-acid polypeptide reads, in one-letter code: Pentatricopeptide repeat-containing protein At3g49170, chloroplastic (850 aa).

The transit peptide at 1–50 (MAMISFSFPSPAKLPIKSQPSVSNRINVADRLILRHLNAGDLRGAVSALD) directs the protein to the chloroplast. PPR repeat units lie at residues 61–95 (DSVT…DIEP), 96–130 (DSVL…GKRD), 131–164 (VVSW…GLVP), 165–199 (NDYC…GHFE), 201–232 (DVCV…MSEL), 233–267 (NVVT…GFES), 268–302 (DKFT…GLVD), 303–334 (DVEC…MEDH), 335–370 (SVMS…GHVE), 372–406 (NHFT…GLAS), 407–437 (NSSV…LSEK), 438–472 (NLVS…ELGV), 473–507 (SAFT…GLSC), 508–538 (NQPV…MENR), 539–573 (NVIS…GVKP), 574–609 (NEVT…KIKP), and 610–640 (KMEH…MPFQ). The segment at 645 to 720 (VWRTFLGACR…EGGCSWIEVG (76 aa)) is type E motif. The segment at 721–751 (DKIHKFYVGDTAHPNAHQIYDELDRLITEIK) is type E(+) motif. Residues 752 to 850 (RCGYVPDTDL…DGKCSCNDYW (99 aa)) are type DYW motif.

This sequence belongs to the PPR family. PCMP-H subfamily.

Its subcellular location is the plastid. The protein localises to the chloroplast. May play a role in embryogenesis. The polypeptide is Pentatricopeptide repeat-containing protein At3g49170, chloroplastic (EMB2261) (Arabidopsis thaliana (Mouse-ear cress)).